The following is a 127-amino-acid chain: Large ribosomal subunit protein bL19 (127 aa).

The protein belongs to the bacterial ribosomal protein bL19 family.

In terms of biological role, this protein is located at the 30S-50S ribosomal subunit interface and may play a role in the structure and function of the aminoacyl-tRNA binding site. This Myxococcus xanthus (strain DK1622) protein is Large ribosomal subunit protein bL19.